A 250-amino-acid polypeptide reads, in one-letter code: Neurotrophic factor BDNF precursor form (250 aa).

The N-terminal stretch at 1–18 (MTILFLTMVISYFGCMKA) is a signal peptide. The propeptide occupies 19 to 131 (APMKEANLRA…AANMSMRVRR (113 aa)). Intrachain disulfides connect cysteine 144–cysteine 211, cysteine 189–cysteine 240, and cysteine 199–cysteine 242.

It belongs to the NGF-beta family. Monomers and homodimers. Binds to NTRK2/TRKB. Can form heterodimers with other neurotrophin family members, such as NTF3 and NTF4 (in vitro), but the physiological relevance of this is not clear. BDNF precursor form: interacts with the heterodimer formed by NGFR and SORCS2. Mature BDNF has much lower affinity for the heterodimer formed by NGFR and SORCS2. Post-translationally, N-glycosylated and glycosulfated, contrary to mature BDNF. In terms of processing, mature BDNF is produced by proteolytic removal of the propeptide, catalyzed by a FURIN family member. In addition, the precursor form is proteolytically cleaved within the propeptide, but this is not an obligatory intermediate for the production of mature BDNF. Can be converted into mature BDNF by plasmin (PLG).

Its subcellular location is the secreted. In terms of biological role, important signaling molecule that activates signaling cascades downstream of NTRK2. During development, promotes the survival and differentiation of selected neuronal populations of the peripheral and central nervous systems. Participates in axonal growth, pathfinding and in the modulation of dendritic growth and morphology. Major regulator of synaptic transmission and plasticity at adult synapses in many regions of the CNS. The versatility of BDNF is emphasized by its contribution to a range of adaptive neuronal responses including long-term potentiation (LTP), long-term depression (LTD), certain forms of short-term synaptic plasticity, as well as homeostatic regulation of intrinsic neuronal excitability. Functionally, important signaling molecule that activates signaling cascades downstream of NTRK2. Activates signaling cascades via the heterodimeric receptor formed by NGFR and SORCS2. Signaling via NGFR and SORCS2 plays a role in synaptic plasticity and long-term depression (LTD). Binding to NGFR and SORCS2 promotes neuronal apoptosis. Promotes neuronal growth cone collapse. This Bos taurus (Bovine) protein is Neurotrophic factor BDNF precursor form (BDNF).